Here is a 289-residue protein sequence, read N- to C-terminus: uncharacterized protein (289 aa).

Helical transmembrane passes span 4–24, 44–64, 68–88, 106–126, 138–158, 166–186, 196–216, 230–250, and 258–278; these read NLLAVLFALASALTIAWGTVV, LNALMTPMWWAGMSTAMLAYF, VALGFGTLLVVQPVLVLSLMF, IFWATLLTVAVGIMIVLGRPL, IPVLLVGVAVMGGMWLLAEYV, ILGLVTGALFGYVAVMSKAAV, GLILNWEGYGLILTALLGTIV, LPAMTIAEPIVAFSLGYLVLG, and WEWIAMGIALLVMIVSTIALS.

The protein localises to the cell membrane. This is an uncharacterized protein from Corynebacterium glutamicum (strain ATCC 13032 / DSM 20300 / JCM 1318 / BCRC 11384 / CCUG 27702 / LMG 3730 / NBRC 12168 / NCIMB 10025 / NRRL B-2784 / 534).